The sequence spans 388 residues: MSEDYRGHHGITGLATKAIHAGYRPDPATGAVNVPIYASSTFAQDGVGELRGGFEYARTGNPMRAALEASLATVEEGVFARAFSSGMAASDCALRVMLRPGDHVIIPDDVYGGTFRLIDKVFTQWNVDYTPVPLSDLDAVRAAITSRTRLIWVETPTNPLLSIADITSIGELGKKHSVKVLVDNTFASPALQQPLMLGADVVLHSTTKYIGGHSDVVGGALVTNDEELDQAFGFLQNGAGAVPSPFDAYLTMRGLKTLVLRMQRHNENAITVAEFLAGHPSVSAVLYPGLPSHPGHEVAARQMRGFGGMVSLRMRAGRLAAQDLCARTKVFTLAESLGGVESLIEQPSAMTHASTTGSQLEVPDDLVRLSVGIEDVGDLLCDLKQALN.

K208 is modified (N6-(pyridoxal phosphate)lysine).

Belongs to the trans-sulfuration enzymes family. As to quaternary structure, homotetramer. Pyridoxal 5'-phosphate is required as a cofactor.

The protein localises to the cytoplasm. It catalyses the reaction O-succinyl-L-homoserine + L-cysteine = L,L-cystathionine + succinate + H(+). In terms of biological role, catalyzes the formation of L-cystathionine from O-succinyl-L-homoserine (OSHS) and L-cysteine, via a gamma-replacement reaction. In the absence of thiol, catalyzes gamma-elimination to form 2-oxobutanoate, succinate and ammonia. This chain is Cystathionine gamma-synthase (metB), found in Mycobacterium leprae (strain TN).